Here is a 200-residue protein sequence, read N- to C-terminus: GMP synthase [glutamine-hydrolyzing] subunit A (200 aa).

The 191-residue stretch at 3-193 (KIYVVDNGGQ…IGICASYREI (191 aa)) folds into the Glutamine amidotransferase type-1 domain. Cysteine 80 acts as the Nucleophile in catalysis. Active-site residues include histidine 167 and glutamate 169.

In terms of assembly, heterodimer composed of a glutamine amidotransferase subunit (A) and a GMP-binding subunit (B).

It carries out the reaction XMP + L-glutamine + ATP + H2O = GMP + L-glutamate + AMP + diphosphate + 2 H(+). Its pathway is purine metabolism; GMP biosynthesis; GMP from XMP (L-Gln route): step 1/1. In terms of biological role, catalyzes the synthesis of GMP from XMP. This Thermoplasma acidophilum (strain ATCC 25905 / DSM 1728 / JCM 9062 / NBRC 15155 / AMRC-C165) protein is GMP synthase [glutamine-hydrolyzing] subunit A.